The sequence spans 629 residues: Arginine--tRNA ligase (629 aa).

Positions 128–138 (VNPTKPLHMGH) match the 'HIGH' region motif.

It belongs to the class-I aminoacyl-tRNA synthetase family.

It localises to the cytoplasm. The catalysed reaction is tRNA(Arg) + L-arginine + ATP = L-arginyl-tRNA(Arg) + AMP + diphosphate. In Pyrococcus furiosus (strain ATCC 43587 / DSM 3638 / JCM 8422 / Vc1), this protein is Arginine--tRNA ligase.